We begin with the raw amino-acid sequence, 528 residues long: Nucleolar GTP-binding protein 1 (528 aa).

An OBG-type G domain is found at 168-335 (RTLLVCGFPN…VKAMACDLLL (168 aa)). Residues 174 to 181 (GFPNVGKS), 220 to 224 (DTPGI), and 287 to 290 (SKSD) each bind GTP. The interval 470-528 (PDSWKHRSRNSGGDIAVHVRRDSKTQVAQPPRLPSKKKARFDDKHYYDRKPKHLYRGRK) is disordered. A compositionally biased stretch (basic and acidic residues) spans 509-518 (RFDDKHYYDR). Over residues 519 to 528 (KPKHLYRGRK) the composition is skewed to basic residues.

The protein belongs to the TRAFAC class OBG-HflX-like GTPase superfamily. OBG GTPase family. NOG subfamily.

The protein localises to the nucleus. Its subcellular location is the nucleolus. Its function is as follows. Involved in the biogenesis of the 60S ribosomal subunit. In Encephalitozoon cuniculi (strain GB-M1) (Microsporidian parasite), this protein is Nucleolar GTP-binding protein 1 (NOG1).